Reading from the N-terminus, the 148-residue chain is Deoxyuridine 5'-triphosphate nucleotidohydrolase (148 aa).

Substrate is bound by residues 67–69 (RSG), Asn80, 84–86 (LID), and Met94.

It belongs to the dUTPase family. Mg(2+) serves as cofactor.

It carries out the reaction dUTP + H2O = dUMP + diphosphate + H(+). It functions in the pathway pyrimidine metabolism; dUMP biosynthesis; dUMP from dCTP (dUTP route): step 2/2. Functionally, this enzyme is involved in nucleotide metabolism: it produces dUMP, the immediate precursor of thymidine nucleotides and it decreases the intracellular concentration of dUTP so that uracil cannot be incorporated into DNA. In Paraburkholderia xenovorans (strain LB400), this protein is Deoxyuridine 5'-triphosphate nucleotidohydrolase.